Reading from the N-terminus, the 190-residue chain is NADH-ubiquinone oxidoreductase chain 5 (190 aa).

The next 6 membrane-spanning stretches (helical) occupy residues 1-21, 68-88, 94-114, 118-138, 146-166, and 167-187; these read MVIS…CLIV, INIL…FVGL, NVTF…SILF, FIVF…FSLL, NVFL…CSNS, and LFLL…LIKM.

It belongs to the complex I subunit 5 family.

The protein localises to the mitochondrion inner membrane. The catalysed reaction is a ubiquinone + NADH + 5 H(+)(in) = a ubiquinol + NAD(+) + 4 H(+)(out). Functionally, core subunit of the mitochondrial membrane respiratory chain NADH dehydrogenase (Complex I) that is believed to belong to the minimal assembly required for catalysis. Complex I functions in the transfer of electrons from NADH to the respiratory chain. The immediate electron acceptor for the enzyme is believed to be ubiquinone. The protein is NADH-ubiquinone oxidoreductase chain 5 (ND5) of Arbacia lixula (Black urchin).